Consider the following 685-residue polypeptide: uncharacterized protein (685 aa).

2 disordered regions span residues 502-538 (NLNQENSRPLQEKNTESSENMTKFPSSRGKSTVSLNK) and 635-685 (RSKR…IHNA). Residues 518 to 538 (SSENMTKFPSSRGKSTVSLNK) are compositionally biased toward polar residues. Over residues 675-685 (KLKKSLIIHNA) the composition is skewed to basic residues.

This is an uncharacterized protein from Homo sapiens (Human).